Reading from the N-terminus, the 273-residue chain is Putative pyruvate, phosphate dikinase regulatory protein 2 (273 aa).

Position 151–158 (151–158) interacts with ADP; that stretch reads GVSRTSKT.

The protein belongs to the pyruvate, phosphate/water dikinase regulatory protein family. PDRP subfamily.

It carries out the reaction N(tele)-phospho-L-histidyl/L-threonyl-[pyruvate, phosphate dikinase] + ADP = N(tele)-phospho-L-histidyl/O-phospho-L-threonyl-[pyruvate, phosphate dikinase] + AMP + H(+). The catalysed reaction is N(tele)-phospho-L-histidyl/O-phospho-L-threonyl-[pyruvate, phosphate dikinase] + phosphate + H(+) = N(tele)-phospho-L-histidyl/L-threonyl-[pyruvate, phosphate dikinase] + diphosphate. Its function is as follows. Bifunctional serine/threonine kinase and phosphorylase involved in the regulation of the pyruvate, phosphate dikinase (PPDK) by catalyzing its phosphorylation/dephosphorylation. The polypeptide is Putative pyruvate, phosphate dikinase regulatory protein 2 (Syntrophomonas wolfei subsp. wolfei (strain DSM 2245B / Goettingen)).